A 134-amino-acid polypeptide reads, in one-letter code: Small ribosomal subunit protein uS11 (134 aa).

2 disordered regions span residues 1–24 and 115–134; these read MPPK…VAHG and IQDV…RRRV. Over residues 9–18 the composition is skewed to basic residues; the sequence is AVKKVRRKEK.

The protein belongs to the universal ribosomal protein uS11 family. As to quaternary structure, part of the 30S ribosomal subunit. Interacts with proteins S7 and S18. Binds to IF-3.

In terms of biological role, located on the platform of the 30S subunit, it bridges several disparate RNA helices of the 16S rRNA. Forms part of the Shine-Dalgarno cleft in the 70S ribosome. This chain is Small ribosomal subunit protein uS11, found in Saccharopolyspora erythraea (strain ATCC 11635 / DSM 40517 / JCM 4748 / NBRC 13426 / NCIMB 8594 / NRRL 2338).